Here is a 226-residue protein sequence, read N- to C-terminus: Peptidyl-prolyl cis-trans isomerase CYP23 (226 aa).

Residues Met1 to Ala22 form the signal peptide. The PPIase cyclophilin-type domain occupies Val34–Tyr191.

Belongs to the cyclophilin-type PPIase family. As to expression, ubiquitous. Lower expression in roots.

The protein resides in the endoplasmic reticulum. It catalyses the reaction [protein]-peptidylproline (omega=180) = [protein]-peptidylproline (omega=0). PPIases accelerate the folding of proteins. It catalyzes the cis-trans isomerization of proline imidic peptide bonds in oligopeptides. The protein is Peptidyl-prolyl cis-trans isomerase CYP23 (CYP23) of Arabidopsis thaliana (Mouse-ear cress).